Here is an 86-residue protein sequence, read N- to C-terminus: UPF0297 protein LCABL_08470 (86 aa).

Belongs to the UPF0297 family.

The sequence is that of UPF0297 protein LCABL_08470 from Lacticaseibacillus casei (strain BL23) (Lactobacillus casei).